Reading from the N-terminus, the 145-residue chain is MLNQLENLAKCVGGNNELIDQWLQARKGLLVAYYHLIGLKPNKEKHTPLDEEALDAFCHQLVDYLSAGHFLVYDSIVPEGESSSTLTYSGLQENTQQIMALYDSHLENAIDHDNYLSFQEALSGVGEALATRFVLEDKLIQQAME.

The protein belongs to the Rsd/AlgQ family. Interacts with RpoD.

It is found in the cytoplasm. Binds RpoD and negatively regulates RpoD-mediated transcription activation by preventing the interaction between the primary sigma factor RpoD with the catalytic core of the RNA polymerase and with promoter DNA. May be involved in replacement of the RNA polymerase sigma subunit from RpoD to RpoS during the transition from exponential growth to the stationary phase. This chain is Regulator of sigma D, found in Sodalis glossinidius (strain morsitans).